Consider the following 280-residue polypeptide: UPF0276 protein NGO_1946 (280 aa).

It belongs to the UPF0276 family.

This is UPF0276 protein NGO_1946 from Neisseria gonorrhoeae (strain ATCC 700825 / FA 1090).